A 673-amino-acid polypeptide reads, in one-letter code: DNA topoisomerase 1 (673 aa).

The Toprim domain occupies 1–134; sequence MVAEKPKAAA…ARRMKFSTLA (134 aa). Mg(2+)-binding residues include Glu-4 and Asp-103. Residues 149-568 form the Topo IA-type catalytic domain; it reads DVEMIEAGMA…MSKKTISKLL (420 aa). The interval 189-194 is interaction with DNA; it reads SAGRVQ. Tyr-311 serves as the catalytic O-(5'-phospho-DNA)-tyrosine intermediate. The segment at 352–374 is disordered; it reads LRPVQGSKDDPAHPAIHPTGEKP. A C4-type zinc finger spans residues 595–615; sequence CHLCGRKAVSAVSGYRLCSHH.

Belongs to the type IA topoisomerase family. As to quaternary structure, monomer. The cofactor is Mg(2+).

The enzyme catalyses ATP-independent breakage of single-stranded DNA, followed by passage and rejoining.. Its function is as follows. Releases the supercoiling and torsional tension of DNA, which is introduced during the DNA replication and transcription, by transiently cleaving and rejoining one strand of the DNA duplex. Introduces a single-strand break via transesterification at a target site in duplex DNA. The scissile phosphodiester is attacked by the catalytic tyrosine of the enzyme, resulting in the formation of a DNA-(5'-phosphotyrosyl)-enzyme intermediate and the expulsion of a 3'-OH DNA strand. The free DNA strand then undergoes passage around the unbroken strand, thus removing DNA supercoils. Finally, in the religation step, the DNA 3'-OH attacks the covalent intermediate to expel the active-site tyrosine and restore the DNA phosphodiester backbone. This chain is DNA topoisomerase 1, found in Aeropyrum pernix (strain ATCC 700893 / DSM 11879 / JCM 9820 / NBRC 100138 / K1).